The following is a 298-amino-acid chain: Tyrosine recombinase XerC (298 aa).

The Core-binding (CB) domain maps to 1-84; the sequence is MNHIQEAFLN…TLRTFYEYWM (84 aa). The Tyr recombinase domain maps to 105–286; sequence YLPQFFYEEE…SNQQLRKVYL (182 aa). Active-site residues include arginine 145, lysine 169, histidine 238, arginine 241, and histidine 264. Tyrosine 273 (O-(3'-phospho-DNA)-tyrosine intermediate) is an active-site residue.

This sequence belongs to the 'phage' integrase family. XerC subfamily. As to quaternary structure, forms a cyclic heterotetrameric complex composed of two molecules of XerC and two molecules of XerD.

It localises to the cytoplasm. Its function is as follows. Site-specific tyrosine recombinase, which acts by catalyzing the cutting and rejoining of the recombining DNA molecules. The XerC-XerD complex is essential to convert dimers of the bacterial chromosome into monomers to permit their segregation at cell division. It also contributes to the segregational stability of plasmids. In Staphylococcus aureus (strain JH1), this protein is Tyrosine recombinase XerC.